The following is a 799-amino-acid chain: Oligopeptide transporter 1 (799 aa).

Disordered stretches follow at residues 1–26 (MSTI…PIQI) and 43–64 (DVNN…QKFD). The Extracellular portion of the chain corresponds to 1 to 108 (MSTIYRESDS…DPTIRLNHWR (108 aa)). Residues 13–26 (SEPSPTPTTIPIQI) show a composition bias toward low complexity. The N-linked (GlcNAc...) asparagine glycan is linked to Asn-46. Phosphothreonine occurs at positions 48, 50, and 51. A helical membrane pass occupies residues 109–129 (TWFLTTVFVVVFAGVNQFFSL). Residues 130–135 (RYPSLE) lie on the Cytoplasmic side of the membrane. The helical transmembrane segment at 136-156 (INFLVAQVVCYPIGRILALLP) threads the bilayer. Over 157–177 (DWKCSKVPFFDLNPGPFTKKE) the chain is Extracellular. A helical membrane pass occupies residues 178-198 (HAVVTIAVALTSSTAYAMYIL). The Cytoplasmic segment spans residues 199–210 (NAQGSFYNMKLN). A helical transmembrane segment spans residues 211–231 (VGYQFLLVWTSQMIGYGAAGL). The Extracellular portion of the chain corresponds to 232 to 276 (TRRWVVNPASSIWPQTLISVSLFDSLHSRKVEKTVANGWTMPRYR). Residues 277–297 (FFLIVLIGSFIWYWVPGFLFT) form a helical membrane-spanning segment. The Cytoplasmic segment spans residues 298 to 313 (GLSYFNVILWGSKTRH). A helical transmembrane segment spans residues 314-334 (NFIANTIFGTQSGLGALPITF). Topologically, residues 335–359 (DYTQVSQAMSGSVFATPFYVSANTY) are extracellular. A helical transmembrane segment spans residues 360-380 (ASVLIFFVIVLPCLYFTNTWY). At 381 to 428 (AKYMPVISGSTYDNTQNKYNVTKILNEDYSINLEKYKEYSPVFVPFSY) the chain is on the cytoplasmic side. Residues 429 to 449 (LLSYALNFAAVIAVFVHCILY) form a helical membrane-spanning segment. At 450–482 (HGKDIVAKFKDRKNGGTDIHMRIYSKNYKDCPD) the chain is on the extracellular side. The chain crosses the membrane as a helical span at residues 483-503 (WWYLLLQIVMIGLGFVAVCCF). The Cytoplasmic portion of the chain corresponds to 504–508 (DTKFP). The helical transmembrane segment at 509–529 (AWAFVIAILISLVNFIPQGIL) threads the bilayer. Residues 530–540 (EAMTNQHVGLN) are Extracellular-facing. A helical membrane pass occupies residues 541 to 561 (IITELICGYMLPLRPMANLLF). The Cytoplasmic segment spans residues 562–590 (KLYGFIVMRQGLNLSRDLKLAMYMKVSPR). Residues 591 to 611 (LIFAVQIYATIISGMVNVGVQ) traverse the membrane as a helical segment. The Extracellular segment spans residues 612 to 659 (EWMMHNIDGLCTTDQPNGFTCANGRTVFNASIIWSLPKYLFSSGRIYN). A glycan (N-linked (GlcNAc...) asparagine) is linked at Asn-640. A helical transmembrane segment spans residues 660 to 680 (PLMWFFLIGLLFPLAVYAVQW). The Cytoplasmic portion of the chain corresponds to 681-736 (KFPKFKFAKHIHTPVFFTGPGNIPPSTPYNYSLFFAMSFCLNLIRKRWRAWFNKYN). A helical transmembrane segment spans residues 737 to 757 (FVMGAGVEAGVAISVVIIFLC). Over 758–799 (VQYPGGKLSWWGNNVWKRTYDNDYKKFYTLKKGETFGYDKWW) the chain is Extracellular.

Belongs to the oligopeptide OPT transporter family.

It is found in the cell membrane. In terms of biological role, high affinity transporter for glutathione. Also transports tetra- and pentapeptides like the opioids leucine enkephalin (Tyr-Gly-Gly-Phe-Leu) and methionine enkephalin (Tyr-Gly-Gly_Phe-Met) across the cell membrane. In Saccharomyces cerevisiae (strain ATCC 204508 / S288c) (Baker's yeast), this protein is Oligopeptide transporter 1 (OPT1).